A 352-amino-acid chain; its full sequence is Chorismate synthase (352 aa).

NADP(+)-binding residues include R48 and R54. Residues 125–127 (RSS), 238–239 (NA), G278, 293–297 (KPTSS), and R319 contribute to the FMN site.

Belongs to the chorismate synthase family. In terms of assembly, homotetramer. Requires FMNH2 as cofactor.

The enzyme catalyses 5-O-(1-carboxyvinyl)-3-phosphoshikimate = chorismate + phosphate. Its pathway is metabolic intermediate biosynthesis; chorismate biosynthesis; chorismate from D-erythrose 4-phosphate and phosphoenolpyruvate: step 7/7. Catalyzes the anti-1,4-elimination of the C-3 phosphate and the C-6 proR hydrogen from 5-enolpyruvylshikimate-3-phosphate (EPSP) to yield chorismate, which is the branch point compound that serves as the starting substrate for the three terminal pathways of aromatic amino acid biosynthesis. This reaction introduces a second double bond into the aromatic ring system. The protein is Chorismate synthase of Bordetella avium (strain 197N).